The sequence spans 675 residues: MTVKEHKVVHEAQNVEALHAPEHFYKSQPGPSYIKDMKQYKEMYKQSVEDPENFFGEKARELLDWDRPFTRSKYGSLENGDVTWFLNGELNAAYNCVDRHAFANPDKPALIYEADEEADNRMITFSELLRQVSRVAGVLQSWGVKKGDTVAVYLPMIPEAVVAMLAIARLGAIHSVVFAGFSAGSLKDRVVDAGCKVVITCDEGKRGGKTVHTKKIVDEGLNGISLVSHILVFQRTGSEGIPMTAGRDYWWHEETAKQRSYLPPVPCNSEDPLFLLYTSGSTGSPKGVVHSTAGYLLGAAMTTRYVFDIHPEDVLFTAGDVGWITGHTYALYGPLVLGTASIIFESTPAYPDYGRYWRIIQRHKATHFYVAPTALRLIKRVGEAEIPKYDISSLRVLGSVGEPISPELWEWYYEKVGNKNCVICDTMWQTESGSHLIAPQAGAVPTKPGSATVPFFGVDACIIDPVTGIELQGNDVEGVLAVKSSWPSMARSVWQNHHRYVDTYLKPYPGYYFTGDGAGRDHDGYYWIRGRVDDVVNVSGHRLSTAEIEASLTNHDNVSESAVVGIADELTGQSVIAFVSLKDGSSRESSAVVAMRRELVLQVRGEIGPFAAPKCVILVKDLPKTRSGKIMRRVLRKVASNEADQLGDLSTMANSEVVPSIIAAVDEQFFAEKKK.

CoA is bound by residues 206–209 (RGGK) and Thr-325. Residues 401–403 (GEP), 425–430 (DTMWQT), Asp-516, and Arg-531 each bind ATP. Ser-539 lines the CoA pocket. Arg-542 lines the ATP pocket. Arg-604 lines the CoA pocket.

Belongs to the ATP-dependent AMP-binding enzyme family.

The catalysed reaction is acetate + ATP + CoA = acetyl-CoA + AMP + diphosphate. The chain is Acetyl-coenzyme A synthetase 2 (ACS2) from Zygosaccharomyces bailii.